The chain runs to 143 residues: MKASKQEKWLDESGENLGILRRLEGNAMLLAMESGGFSKEDLWFLQDEQGEEYVVFPQKIFVQLLSHIKNIQEEKLVMRLEKDIISQMPIDFDDAMVVAKNALESLRLNDGNLPDINTNTLAKDIKKKYPNLFFDIDYLRKSK.

Belongs to the UPF0763 family.

The sequence is that of UPF0763 protein HH_0976 from Helicobacter hepaticus (strain ATCC 51449 / 3B1).